Here is a 104-residue protein sequence, read N- to C-terminus: Photosystem II reaction center Psb28 protein (104 aa).

The protein belongs to the Psb28 family. In terms of assembly, part of the photosystem II complex.

It is found in the cellular thylakoid membrane. The polypeptide is Photosystem II reaction center Psb28 protein (Synechococcus sp. (strain JA-3-3Ab) (Cyanobacteria bacterium Yellowstone A-Prime)).